The following is a 455-amino-acid chain: Kynurenine 3-monooxygenase (455 aa).

Belongs to the aromatic-ring hydroxylase family. KMO subfamily. The cofactor is FAD.

The enzyme catalyses L-kynurenine + NADPH + O2 + H(+) = 3-hydroxy-L-kynurenine + NADP(+) + H2O. The protein operates within cofactor biosynthesis; NAD(+) biosynthesis; quinolinate from L-kynurenine: step 1/3. Catalyzes the hydroxylation of L-kynurenine (L-Kyn) to form 3-hydroxy-L-kynurenine (L-3OHKyn). Required for synthesis of quinolinic acid. The polypeptide is Kynurenine 3-monooxygenase (Xanthomonas axonopodis pv. citri (strain 306)).